A 262-amino-acid chain; its full sequence is 3-deoxy-manno-octulosonate cytidylyltransferase (262 aa).

It belongs to the KdsB family.

The protein resides in the cytoplasm. It catalyses the reaction 3-deoxy-alpha-D-manno-oct-2-ulosonate + CTP = CMP-3-deoxy-beta-D-manno-octulosonate + diphosphate. It functions in the pathway nucleotide-sugar biosynthesis; CMP-3-deoxy-D-manno-octulosonate biosynthesis; CMP-3-deoxy-D-manno-octulosonate from 3-deoxy-D-manno-octulosonate and CTP: step 1/1. The protein operates within bacterial outer membrane biogenesis; lipopolysaccharide biosynthesis. Functionally, activates KDO (a required 8-carbon sugar) for incorporation into bacterial lipopolysaccharide in Gram-negative bacteria. This chain is 3-deoxy-manno-octulosonate cytidylyltransferase, found in Acidovorax sp. (strain JS42).